Here is a 154-residue protein sequence, read N- to C-terminus: MSLIPRIFGDRRSSSMFDPFSIDVFDPFRELGFPGTNSGETSAFANTRIDWKETPEAHVFKADLPGLKLEEVKVEVEEDRVLQISGERNMEKEDKNDKWQRVERSSGKFMRRFRLPENAKMDQVKASMENGVLTVTVPKEEMKKPDVKSIEISG.

Residues 40–154 (ETSAFANTRI…PDVKSIEISG (115 aa)) enclose the sHSP domain.

It belongs to the small heat shock protein (HSP20) family. As to quaternary structure, forms oligomeric structures.

The protein localises to the cytoplasm. The sequence is that of 17.7 kDa class I heat shock protein from Solanum peruvianum (Peruvian tomato).